A 396-amino-acid polypeptide reads, in one-letter code: NADH-quinone oxidoreductase subunit D (396 aa).

The protein belongs to the complex I 49 kDa subunit family. NDH-1 is composed of 14 different subunits. Subunits NuoB, C, D, E, F, and G constitute the peripheral sector of the complex.

Its subcellular location is the cell inner membrane. The catalysed reaction is a quinone + NADH + 5 H(+)(in) = a quinol + NAD(+) + 4 H(+)(out). NDH-1 shuttles electrons from NADH, via FMN and iron-sulfur (Fe-S) centers, to quinones in the respiratory chain. The immediate electron acceptor for the enzyme in this species is believed to be ubiquinone. Couples the redox reaction to proton translocation (for every two electrons transferred, four hydrogen ions are translocated across the cytoplasmic membrane), and thus conserves the redox energy in a proton gradient. The sequence is that of NADH-quinone oxidoreductase subunit D from Bartonella quintana (strain Toulouse) (Rochalimaea quintana).